Consider the following 370-residue polypeptide: F-box/kelch-repeat protein At4g38940 (370 aa).

Residues 18 to 64 (PCLISLLPEEIVVDIVARVPRCYYPTLSQVSRRFRSLVASPEIYKRR) form the F-box domain. Kelch repeat units lie at residues 131 to 177 (NIFV…LIDR), 178 to 230 (KIYV…VIGG), and 263 to 315 (SACV…SYTG).

In terms of assembly, part of a SCF (ASK-cullin-F-box) protein ligase complex. Interacts with SKP1A/ASK1, SKP1B/ASK2, ASK11, ASK13 and ASK18.

It localises to the nucleus. Its pathway is protein modification; protein ubiquitination. Its function is as follows. Component of SCF(ASK-cullin-F-box) E3 ubiquitin ligase complexes, which may mediate the ubiquitination and subsequent proteasomal degradation of target proteins. This Arabidopsis thaliana (Mouse-ear cress) protein is F-box/kelch-repeat protein At4g38940.